Consider the following 156-residue polypeptide: UPF0756 membrane protein Exig_2210 (156 aa).

5 helical membrane-spanning segments follow: residues 5–25 (LFLI…LIIA), 52–72 (WGVT…DIGF), 83–103 (IGII…HGVG), 109–129 (PLVT…FRGV), and 131–151 (VGPL…DIIV).

This sequence belongs to the UPF0756 family.

The protein localises to the cell membrane. The chain is UPF0756 membrane protein Exig_2210 from Exiguobacterium sibiricum (strain DSM 17290 / CCUG 55495 / CIP 109462 / JCM 13490 / 255-15).